The sequence spans 201 residues: Small ribosomal subunit protein uS4c (201 aa).

An S4 RNA-binding domain is found at 89 to 149; that stretch reads MRLDNILFRL…DKPKSGALIK (61 aa).

This sequence belongs to the universal ribosomal protein uS4 family. As to quaternary structure, part of the 30S ribosomal subunit. Contacts protein S5. The interaction surface between S4 and S5 is involved in control of translational fidelity.

Its subcellular location is the plastid. Functionally, one of the primary rRNA binding proteins, it binds directly to 16S rRNA where it nucleates assembly of the body of the 30S subunit. In terms of biological role, with S5 and S12 plays an important role in translational accuracy. The sequence is that of Small ribosomal subunit protein uS4c (rps4) from Cuscuta reflexa (Southern Asian dodder).